We begin with the raw amino-acid sequence, 612 residues long: Apoptosis-inducing factor 1, mitochondrial (612 aa).

Short sequence motifs (mitochondrial localization signal) lie at residues 1 to 30 and 62 to 88; these read MFRC…PKQR and KMDN…KTIK. The N-terminal 53 residues, 1–53, are a transit peptide targeting the mitochondrion; sequence MFRCGGLAGAFKQKLVPLVRSVCVQRPKQRNRLPGNLFQQWRVPLELQMARQM. 2 propeptides (removed in mature form) span residues 54–100 and 55–101; these read ASSG…RIMG and SSGP…IMGL. The residue at position 108 (Lys108) is an N6-succinyllysine. Ser115 bears the Phosphoserine mark. Positions 133 to 482 are FAD-dependent oxidoreductase; sequence FLLIGGGTAA…KPYWHQSMFW (350 aa). Residues 137 to 141, 163 to 164, Arg171, and Lys176 contribute to the FAD site; these read GGGTA and ED. Trp195 is a binding site for NAD(+). Val232 serves as a coordination point for FAD. Lys254 is covalently cross-linked (Glycyl lysine isopeptide (Lys-Gly) (interchain with G-Cter in ubiquitin)). The residue at position 267 (Ser267) is a Phosphoserine. An FAD-binding site is contributed by Arg284. Residues 307-310, Glu335, and Lys341 each bind NAD(+); that span reads GGFL. Ser370 bears the Phosphoserine mark. N6-acetyllysine is present on Lys387. Gly398 contacts NAD(+). An FAD-binding site is contributed by Asp437. The Nuclear localization signal signature appears at 445-450; sequence KLGRRR. Residues 452–453, Trp482, and Glu492 each bind NAD(+); that span reads EH. Residues 453–454 and Trp482 contribute to the FAD site; that span reads HH. A compositionally biased stretch (polar residues) spans 512-528; sequence AQDNPKSATEQSGTGIR. The disordered stretch occupies residues 512-551; sequence AQDNPKSATEQSGTGIRSESETESEASEITIPPSDPAVPQ. Thr520 is subject to Phosphothreonine. 2 positions are modified to phosphoserine: Ser523 and Ser529. Asn582 contributes to the NAD(+) binding site. An N6-acetyllysine modification is found at Lys592.

This sequence belongs to the FAD-dependent oxidoreductase family. Monomer (oxidized form). Homodimer (reduced form). Upon reduction with NADH, undergoes dimerization and forms tight, long-lived FADH2-NAD charge transfer complexes (CTC) resistant to oxidation. Also dimerizes with isoform 3 preventing its release from mitochondria. Interacts with XIAP/BIRC4. Interacts (via N-terminus) with EIF3G (via C-terminus). Interacts with PRELID1. Interacts with CHCHD4; the interaction increases in presence of NADH. Interacts with processed form of PARP1 (Poly [ADP-ribose] polymerase 1, processed C-terminus); interaction is mediated with poly-ADP-ribose chains attached to PARP1, promoting translocation into the nucleus. FAD serves as cofactor. Post-translationally, under normal conditions, a 54-residue N-terminal segment is first proteolytically removed during or just after translocation into the mitochondrial intermembrane space (IMS) by the mitochondrial processing peptidase (MPP) to form the inner-membrane-anchored mature form (AIFmit). During apoptosis, it is further proteolytically processed at amino-acid position 101 leading to the generation of the mature form, which is confined to the mitochondrial IMS in a soluble form (AIFsol). AIFsol is released to the cytoplasm in response to specific death signals, and translocated to the nucleus, where it induces nuclear apoptosis in a caspase-independent manner. In terms of processing, ubiquitination by XIAP/BIRC4 does not lead to proteasomal degradation. Ubiquitination at Lys-254 by XIAP/BIRC4 blocks its ability to bind DNA and induce chromatin degradation, thereby inhibiting its ability to induce cell death.

It localises to the mitochondrion intermembrane space. The protein localises to the mitochondrion inner membrane. It is found in the cytoplasm. Its subcellular location is the nucleus. The protein resides in the perinuclear region. It catalyses the reaction A + NADH + H(+) = AH2 + NAD(+). Functionally, functions both as NADH oxidoreductase and as regulator of apoptosis. In response to apoptotic stimuli, it is released from the mitochondrion intermembrane space into the cytosol and to the nucleus, where it functions as a proapoptotic factor in a caspase-independent pathway. Release into the cytoplasm is mediated upon binding to poly-ADP-ribose chains. The soluble form (AIFsol) found in the nucleus induces 'parthanatos' i.e. caspase-independent fragmentation of chromosomal DNA. Binds to DNA in a sequence-independent manner. Interacts with EIF3G, and thereby inhibits the EIF3 machinery and protein synthesis, and activates caspase-7 to amplify apoptosis. Plays a critical role in caspase-independent, pyknotic cell death in hydrogen peroxide-exposed cells. In contrast, participates in normal mitochondrial metabolism. Plays an important role in the regulation of respiratory chain biogenesis by interacting with CHCHD4 and controlling CHCHD4 mitochondrial import. This is Apoptosis-inducing factor 1, mitochondrial (Aifm1) from Rattus norvegicus (Rat).